Reading from the N-terminus, the 1514-residue chain is MDFIEISLIFREHLPLLELCSVIINLLLFLVFLFAVSARQILVCVRRGRDRLSKDDTVSASNLSLEREVNHVSVGFGFNLSLLCCLYVLGVQVLVLVYDGVKVRREVSDWFVLCFPASQSLAWFVLSFLVLHLKYKSSEKLPFLVRIWWFLAFSICLCTMYVDGRRLAIEGWSRCSSHVVANLAVTPALGFLCFLAWRGVSGIQVTRSSSDLQEPLLVEEEAACLKVTPYSTAGLVSLITLSWLDPLLSAGSKRPLELKDIPLLAPRDRAKSSYKVLKSNWKRCKSENPSKPPSLARAIMKSFWKEAACNAVFAGLNTLVSYVGPYLISYFVDYLGGKEIFPHEGYVLAGIFFTSKLIETVTTRQWYMGVDILGMHVRSALTAMVYRKGLKLSSIAKQNHTSGEIVNYMAVDVQRIGDYSWYLHDIWMLPMQIVLALAILYKSVGIAAVATLVATIISILVTIPLAKVQEDYQDKLMTAKDERMRKTSECLRNMRVLKLQAWEDRYRVRLEEMREEEYGWLRKALYSQAFVTFIFWSSPIFVAAVTFATSIFLGTQLTAGGVLSALATFRILQEPLRNFPDLVSMMAQTKVSLDRISGFLQEEELQEDATVVIPRGLSNIAIEIKDGVFCWDPFSSRPTLSGIQMKVEKGMRVAVCGTVGSGKSSFISCILGEIPKISGEVRICGTTGYVSQSAWIQSGNIEENILFGSPMEKTKYKNVIQACSLKKDIELFSHGDQTIIGERGINLSGGQKQRVQLARALYQDADIYLLDDPFSALDAHTGSDLFRDYILSALAEKTVVFVTHQVEFLPAADLILVLKEGRIIQSGKYDDLLQAGTDFKALVSAHHEAIEAMDIPSPSSEDSDENPIRDSLVLHNPKSDVFENDIETLAKEVQEGGSASDLKAIKEKKKKAKRSRKKQLVQEEERVKGKVSMKVYLSYMGAAYKGALIPLIILAQAAFQFLQIASNWWMAWANPQTEGDESKVDPTLLLIVYTALAFGSSVFIFVRAALVATFGLAAAQKLFLNMLRSVFRAPMSFFDSTPAGRILNRVSIDQSVVDLDIPFRLGGFASTTIQLCGIVAVMTNVTWQVFLLVVPVAVACFWMQKYYMASSRELVRIVSIQKSPIIHLFGESIAGAATIRGFGQEKRFIKRNLYLLDCFVRPFFCSIAAIEWLCLRMELLSTLVFAFCMVLLVSFPHGTIDPSMAGLAVTYGLNLNGRLSRWILSFCKLENKIISIERIYQYSQIVGEAPAIIEDFRPPSSWPATGTIELVDVKVRYAENLPTVLHGVSCVFPGGKKIGIVGRTGSGKSTLIQALFRLIEPTAGKITIDNIDISQIGLHDLRSRLGIIPQDPTLFEGTIRANLDPLEEHSDDKIWEALDKSQLGDVVRGKDLKLDSPVLENGDNWSVGQRQLVSLGRALLKQAKILVLDEATASVDTATDNLIQKIIRTEFEDCTVCTIAHRIPTVIDSDLVLVLSDGRVAEFDTPARLLEDKSSMFLKLVTEYSSRSTGIPEL.

10 helical membrane-spanning segments follow: residues 16–36, 76–96, 111–131, 142–162, 177–197, 312–332, 334–354, 421–441, 446–466, and 533–553; these read LLEL…LFAV, FGFN…VLVL, FVLC…FLVL, PFLV…TMYV, SHVV…FLAW, VFAG…SYFV, YLGG…IFFT, WYLH…AILY, IAAV…IPLA, and FIFW…SIFL. Residues 307 to 588 form the ABC transmembrane type-1 1 domain; that stretch reads AACNAVFAGL…FPDLVSMMAQ (282 aa). One can recognise an ABC transporter 1 domain in the interval 622–845; sequence IEIKDGVFCW…GTDFKALVSA (224 aa). 657–664 is a binding site for ATP; it reads GTVGSGKS. The stretch at 899–927 forms a coiled coil; that stretch reads ASDLKAIKEKKKKAKRSRKKQLVQEEERV. Transmembrane regions (helical) follow at residues 946–966, 986–1006, 1078–1098, 1117–1137, 1155–1175, and 1180–1200; these read GALI…QIAS, PTLL…FIFV, IVAV…PVAV, IVSI…AGAA, LLDC…WLCL, and LSTL…HGTI. In terms of domain architecture, ABC transmembrane type-1 2 spans 949 to 1231; it reads IPLIILAQAA…WILSFCKLEN (283 aa). Residues 1268–1502 enclose the ABC transporter 2 domain; it reads IELVDVKVRY…KSSMFLKLVT (235 aa). Residue 1302–1309 coordinates ATP; that stretch reads GRTGSGKS.

Belongs to the ABC transporter superfamily. ABCC family. Conjugate transporter (TC 3.A.1.208) subfamily. In terms of tissue distribution, ubiquitous, mostly in vascular tissues and epidermis, including guard cells.

The protein localises to the membrane. The enzyme catalyses ATP + H2O + xenobioticSide 1 = ADP + phosphate + xenobioticSide 2.. (E(2)17G) transport activity in negatively regulated by organic anions such as oestradiol-3-sulfate, luteolin-7-O-diglucuronide-4'-O-glucuronide, glycocholate, vanadate and the sulfonylurea glibenclamide, and, to a lower extent, by bafilomycin A1, NH(4)Cl, GSH, GSSG and DNB-GS. Functionally, pump for glutathione S-conjugates. Involved in regulation of K(+) and Na(+) cell content. Mediates resistance to NaCl and Li(+), confers sensitivity to sulfonylurea drugs such as glibenclamide (inducer of stomatal opening), and required for stomatal opening regulation by auxin, abscisic acid (ABA) and external Ca(2+). Transports oestradiol-17-(beta-D-glucuronide) (E(2)17G). Involved in the root auxin content regulation that controls the transition from primary root elongation to lateral root formation. Plays a role in ABA-mediated germination inhibition. High-affinity inositol hexakisphosphate transporter that plays a role in guard cell signaling and phytic acid storage. Required for phytic acid accumulation in developing seeds. Phytic acid is the primary storage form of phosphorus in cereal grains and other plant seeds. This Arabidopsis thaliana (Mouse-ear cress) protein is ABC transporter C family member 5 (ABCC5).